The chain runs to 487 residues: N-succinylglutamate 5-semialdehyde dehydrogenase (487 aa).

221 to 226 (GSSDTG) provides a ligand contact to NAD(+). Catalysis depends on residues Glu-244 and Cys-278.

The protein belongs to the aldehyde dehydrogenase family. AstD subfamily.

The catalysed reaction is N-succinyl-L-glutamate 5-semialdehyde + NAD(+) + H2O = N-succinyl-L-glutamate + NADH + 2 H(+). It functions in the pathway amino-acid degradation; L-arginine degradation via AST pathway; L-glutamate and succinate from L-arginine: step 4/5. Its function is as follows. Catalyzes the NAD-dependent reduction of succinylglutamate semialdehyde into succinylglutamate. In Burkholderia mallei (strain ATCC 23344), this protein is N-succinylglutamate 5-semialdehyde dehydrogenase.